The sequence spans 209 residues: Thymidine kinase (209 aa).

Residues 9-16 (SAMNAGKT) and 88-91 (DEAQ) each bind ATP. Glutamate 89 acts as the Proton acceptor in catalysis.

It belongs to the thymidine kinase family. In terms of assembly, homotetramer.

It localises to the cytoplasm. It catalyses the reaction thymidine + ATP = dTMP + ADP + H(+). This chain is Thymidine kinase, found in Xanthomonas oryzae pv. oryzae (strain MAFF 311018).